A 1095-amino-acid polypeptide reads, in one-letter code: MASSSSNSWRYDVFPSFRGEDVRNNFLSHLLKEFESKGIVTFRDDHIKRSHTIGHELRAAIRESKISVVLFSENYASSSWCLDELIEIMKCKEEQGLKVMPVFYKVDPSDIRKQTGKFGMSFLETCCGKTEERQHNWRRALTDAANILGDHPQNWDNEAYKITTISKDVLEKLNATPSRDFNDLVGMEAHIAKMESLLCLESQGVRIVGIWGPAGVGKTTIARALYNQYHENFNLSIFMENVRESYGEAGLDDYGLKLHLQQRFLSKLLDQKDLRVRHLGAIEERLKSQKVLIILDDVDNIEQLKALAKENQWFGNKSRIVVTTQNKQLLVSHDINHMYQVAYPSKQEALTIFCQHAFKQSSPSDDLKHLAIEFTTLAGHLPLALRVLGSFMRGKGKEEWEFSLPTLKSRLDGEVEKVLKVGYDGLHDHEKDLFLHIACIFSGQHENYLKQMIIANNDTYVSFGLQVLADKSLIQKFENGRIEMHSLLRQLGKEVVRKQSIYEPGKRQFLMNAKETCGVLSNNTGTGTVLGISLDMCEIKEELYISEKTFEEMRNLVYLKFYMSSPIDDKMKVKLQLPEEGLSYLPQLRLLHWDAYPLEFFPSSFRPECLVELNMSHSKLKKLWSGVQPLRNLRTMNLNSSRNLEILPNLMEATKLNRLDLGWCESLVELPSSIKNLQHLILLEMSCCKKLEIIPTNINLPSLEVLHFRYCTRLQTFPEISTNIRLLNLIGTAITEVPPSVKYWSKIDEICMERAKVKRLVHVPYVLEKLCLRENKELETIPRYLKYLPRLQMIDISYCINIISLPKLPGSVSALTAVNCESLQILHGHFRNKSIHLNFINCLKLGQRAQEKIHRSVYIHQSSYIADVLPGEHVPAYFSYRSTGSSIMIHSNKVDLSKFNRFKVCLVLGAGKRFEGCDIKFYKQFFCKPREYYVPKHLDSPLLKSDHLCMCEFELMPPHPPTEWELLHPNEFLEVSFESRGGLYKCEVKECGLQFLEPHETSEFRYLSPHLYLGGSWIGNSSSSIEEIIHVDQEESSSDSEEIIYADQEESSSGIEEIIHAEREGTNRRKSVMRWIKVGARKMGLSLECLKPWTR.

One can recognise a TIR domain in the interval 9–173; that stretch reads WRYDVFPSFR…TISKDVLEKL (165 aa). The active site involves E84. In terms of domain architecture, NB-ARC spans 168–454; it reads DVLEKLNATP…HENYLKQMII (287 aa). LRR repeat units lie at residues 609–631, 632–654, 655–677, 679–701, 702–722, and 723–744; these read CLVE…QPLR, NLRT…MEAT, KLNR…IKNL, HLIL…INLP, SLEV…EIST, and NIRL…VKYW.

The enzyme catalyses NAD(+) + H2O = ADP-D-ribose + nicotinamide + H(+). The sequence is that of Putative disease resistance protein At4g11170 from Arabidopsis thaliana (Mouse-ear cress).